The chain runs to 212 residues: Putative inactive 6-phospho-alpha-glucosidase (212 aa).

Residue 4–70 coordinates NAD(+); it reads FSVVVAGGGS…PDIAFSYTTD (67 aa). 2 residues coordinate Mn(2+): cysteine 169 and histidine 200.

It belongs to the glycosyl hydrolase 4 family.

This Escherichia coli (strain K12) protein is Putative inactive 6-phospho-alpha-glucosidase.